The sequence spans 295 residues: MEVGSKSFATASKLFDAKTRRSVLMLYAWCRHCDDVIDDQVLGFSNDTPSLQSAEQRLAQLEMKTRQPMRIQMHEPAFAAFQEVAMAHDILPAYAFDHLAGFAMDVHETRYQTLDDTLRYCYHVAGVVGLMMAQIMGVRDNATLDRACDLGLAFQLTNIARDIVEDAEAGRCYLPAAWLAEEGLTRENLADPQNRKALSRVARRLVETAEPYYRSASAGLPGLPLRSAWAIATAQQVYRKIGMKVVQAGSQAWEQRQSTSTPEKLALLVAASGQAVTSRVARHAPRSADLWQRPV.

This sequence belongs to the phytoene/squalene synthase family. ATP serves as cofactor. The cofactor is Mn(2+).

The enzyme catalyses 2 (2E,6E,10E)-geranylgeranyl diphosphate = 15-cis-phytoene + 2 diphosphate. It participates in carotenoid biosynthesis; phytoene biosynthesis. With respect to regulation, significant inhibition is seen at GGPP concentrations above 100 uM. Functionally, involved in the biosynthesis of carotenoids. Catalyzes stereoselectively the condensation of two molecules of geranylgeranyl diphosphate (GGPP) to give prephytoene diphosphate (PPPP) and the subsequent rearrangement of the cyclopropylcarbinyl intermediate to yield 15-cis-phytoene. This is 15-cis-phytoene synthase (crtB) from Enterobacter agglomerans (Erwinia herbicola).